Here is a 175-residue protein sequence, read N- to C-terminus: Large ribosomal subunit protein uL6 (175 aa).

Belongs to the universal ribosomal protein uL6 family. As to quaternary structure, part of the 50S ribosomal subunit.

Functionally, this protein binds to the 23S rRNA, and is important in its secondary structure. It is located near the subunit interface in the base of the L7/L12 stalk, and near the tRNA binding site of the peptidyltransferase center. The sequence is that of Large ribosomal subunit protein uL6 from Xanthomonas oryzae pv. oryzae (strain MAFF 311018).